We begin with the raw amino-acid sequence, 300 residues long: Probable low-salt glycan biosynthesis reductase Agl14 (300 aa).

NADH contacts are provided by residues 10–12 (GLL), 46–47 (DI), and 70–72 (AYT). NADPH contacts are provided by residues 11-12 (LL), 46-47 (DI), 70-72 (AYT), Tyr109, Tyr135, and Lys139. NADH is bound by residues Tyr135 and Lys139. Tyr135 acts as the Proton donor/acceptor in catalysis.

It belongs to the dTDP-4-dehydrorhamnose reductase family.

The protein operates within protein modification; protein glycosylation. It functions in the pathway cell surface structure biogenesis; S-layer biogenesis. Functionally, reductase involved in N-glycan biosynthetic pathway that takes place under low-salt conditions (1.75 M instead of 3.4 M). Participates in the formation of the tetrasaccharide present at 'Asn-532' of S-layer glycoprotein Csg, consisting of a sulfated hexose, 2 hexoses and rhamnose. Involved in the addition of final rhamnose (sugar 4) of the tetrasaccharide on the dolichol phosphate carrier. The polypeptide is Probable low-salt glycan biosynthesis reductase Agl14 (agl14) (Haloferax volcanii (strain ATCC 29605 / DSM 3757 / JCM 8879 / NBRC 14742 / NCIMB 2012 / VKM B-1768 / DS2) (Halobacterium volcanii)).